The primary structure comprises 632 residues: Arginine--tRNA ligase (632 aa).

The 'HIGH' region signature appears at 129–139 (ANPVHPLHVGS).

This sequence belongs to the class-I aminoacyl-tRNA synthetase family.

Its subcellular location is the cytoplasm. The catalysed reaction is tRNA(Arg) + L-arginine + ATP = L-arginyl-tRNA(Arg) + AMP + diphosphate. The polypeptide is Arginine--tRNA ligase (Korarchaeum cryptofilum (strain OPF8)).